Consider the following 250-residue polypeptide: 2,3-bisphosphoglycerate-dependent phosphoglycerate mutase (250 aa).

Residues 8 to 15, 21 to 22, Arg60, 87 to 90, Lys98, 114 to 115, and 183 to 184 contribute to the substrate site; these read RHGESQWN, TG, ERHY, RR, and GN. The active-site Tele-phosphohistidine intermediate is His9. Glu87 functions as the Proton donor/acceptor in the catalytic mechanism.

Belongs to the phosphoglycerate mutase family. BPG-dependent PGAM subfamily. Homodimer.

It catalyses the reaction (2R)-2-phosphoglycerate = (2R)-3-phosphoglycerate. Its pathway is carbohydrate degradation; glycolysis; pyruvate from D-glyceraldehyde 3-phosphate: step 3/5. Functionally, catalyzes the interconversion of 2-phosphoglycerate and 3-phosphoglycerate. The polypeptide is 2,3-bisphosphoglycerate-dependent phosphoglycerate mutase (Bordetella parapertussis (strain 12822 / ATCC BAA-587 / NCTC 13253)).